The primary structure comprises 1131 residues: Translation initiation factor IF-2 (1131 aa).

The tract at residues 49-542 (KFKGSVSSNE…AFIMPKPQQS (494 aa)) is disordered. A compositionally biased stretch (basic and acidic residues) spans 60-75 (KSIDNGKASRVEKPEK). Polar residues-rich tracts occupy residues 76-88 (NNSV…QTPS) and 108-125 (SEQN…NIQS). Residues 127 to 138 (GDRKYQHTDRRP) show a composition bias toward basic and acidic residues. Polar residues predominate over residues 139–152 (QGNNGEGPQTSTNS). Composition is skewed to basic and acidic residues over residues 164-180 (GDRR…RPYN) and 223-239 (GDRR…RPYN). The span at 411 to 436 (GQGGYGGRPQGQGSYGGRPQGQGGYA) shows a compositional bias: gly residues. Composition is skewed to basic and acidic residues over residues 450–479 (KDFD…KSSI) and 487–530 (LTKE…DPNR). The 170-residue stretch at 632-801 (KRPPVVCVMG…ILTAEMGELK (170 aa)) folds into the tr-type G domain. The G1 stretch occupies residues 641 to 648 (GHVDHGKT). 641-648 (GHVDHGKT) contributes to the GTP binding site. Positions 666-670 (GITQH) are G2. The tract at residues 687–690 (DTPG) is G3. GTP is bound by residues 687–691 (DTPGH) and 741–744 (NKID). A G4 region spans residues 741–744 (NKID). A G5 region spans residues 777–779 (SAH).

The protein belongs to the TRAFAC class translation factor GTPase superfamily. Classic translation factor GTPase family. IF-2 subfamily.

It is found in the cytoplasm. One of the essential components for the initiation of protein synthesis. Protects formylmethionyl-tRNA from spontaneous hydrolysis and promotes its binding to the 30S ribosomal subunits. Also involved in the hydrolysis of GTP during the formation of the 70S ribosomal complex. The chain is Translation initiation factor IF-2 from Lachnoclostridium phytofermentans (strain ATCC 700394 / DSM 18823 / ISDg) (Clostridium phytofermentans).